The following is a 148-amino-acid chain: Small ribosomal subunit protein uS12 (148 aa).

Belongs to the universal ribosomal protein uS12 family. In terms of assembly, part of the 30S ribosomal subunit.

With S4 and S5 plays an important role in translational accuracy. Located at the interface of the 30S and 50S subunits. The chain is Small ribosomal subunit protein uS12 from Methanocaldococcus jannaschii (strain ATCC 43067 / DSM 2661 / JAL-1 / JCM 10045 / NBRC 100440) (Methanococcus jannaschii).